A 281-amino-acid polypeptide reads, in one-letter code: MKNFVSMHAILLACSAGAGLAAITQGISEGTYSRIVEMATISQAAYANLCNIPSTITSAGKIYNAETDINGWVLRDDSRQEIITVFRGTGSDTNLQLDTNYTQAPFDTLPQCSGCAVHGGYYVGWISVKDQVEGLVQQQASQYPDYSLVITGHSLGASMAAITAAQLSATYNNITVYTFGEPRTGNQAYASYVDETFQATNPDATKFYRVTHTNDGIPNLPPTSQGYVHHGTEYWSVEPHGPQNMYLCLGDEVQCCEAQGGQGVNDAHVTYFGMASGACTW.

A signal peptide spans 1 to 21 (MKNFVSMHAILLACSAGAGLA). 3 cysteine pairs are disulfide-bonded: Cys50–Cys279, Cys112–Cys115, and Cys248–Cys255. Asp98 contacts substrate. Asn100 carries an N-linked (GlcNAc...) asparagine glycan. Tyr101 provides a ligand contact to substrate. The active-site Nucleophile is Ser154. Asn173 carries N-linked (GlcNAc...) asparagine glycosylation. Asp215 (charge relay system) is an active-site residue. Residue His268 participates in substrate binding. His268 functions as the Charge relay system in the catalytic mechanism.

Belongs to the AB hydrolase superfamily. FaeA family.

The protein localises to the secreted. The catalysed reaction is feruloyl-polysaccharide + H2O = ferulate + polysaccharide.. Involved in degradation of plant cell walls. Hydrolyzes the feruloyl-arabinose ester bond in arabinoxylans, and the feruloyl-galactose ester bond in pectin. This Aspergillus flavus (strain ATCC 200026 / FGSC A1120 / IAM 13836 / NRRL 3357 / JCM 12722 / SRRC 167) protein is Probable feruloyl esterase A (faeA).